We begin with the raw amino-acid sequence, 163 residues long: Transcriptional repressor NrdR (163 aa).

A zinc finger spans residues 3–34 (CPFCAHPEDKVVDSRESKEGESIRRRRECLKC). Positions 49–139 (YMVVKKDGRR…VYLDFKDVRE (91 aa)) constitute an ATP-cone domain.

It belongs to the NrdR family. The cofactor is Zn(2+).

Negatively regulates transcription of bacterial ribonucleotide reductase nrd genes and operons by binding to NrdR-boxes. The polypeptide is Transcriptional repressor NrdR (Koribacter versatilis (strain Ellin345)).